The following is a 136-amino-acid chain: Large ribosomal subunit protein uL14 (136 aa).

The protein belongs to the universal ribosomal protein uL14 family.

The polypeptide is Large ribosomal subunit protein uL14 (rpl23) (Dictyostelium discoideum (Social amoeba)).